A 502-amino-acid chain; its full sequence is MAQRCVCVLALVAMLLLVFPTVSRSMGPRSGEHQRASRIPSQFSKEERVAMKEALKGAIQIPTVTFSSEKSNTTALAEFGKYIHKVFPTVVSTSFIQHEVVEEYSHLFTIQGSDPSLQPYLLMAHFDVVPAPEEGWEVPPFSGLERDGIIYGRGTLDDKNSVMALLQALELLLIRKYIPRRSFFISLGHDEESSGTGAQRISALLQSRGVQLAFIVDEGGFILDDFIPNFKKPIALIAVSEKGSMNLMLQVNMTSGHSSAPPKETSIGILAAAVSRLEQTPMPIIFGSGTVVTVLQQLANEFPFPVNIILSNPWLFEPLISRFMERNPLTNAIIRTTTALTIFKAGVKFNVIPPVAQATVNFRIHPGQTVQEVLELTKNIVADNRVQFHVLSAFDPLPVSPSDDKALGYQLLRQTVQSVFPEVNITAPVTSIGNTDSRFFTNLTTGIYRFYPIYIQPEDFKRIHGVNEKISVQAYETQVKFIFELIQNADTDQEPVSHLHKL.

The N-terminal stretch at 1 to 25 is a signal peptide; that stretch reads MAQRCVCVLALVAMLLLVFPTVSRS. Histidine 125 contributes to the Zn(2+) binding site. Residue aspartate 127 is part of the active site. Residue aspartate 157 participates in Zn(2+) binding. The active-site Proton acceptor is glutamate 191. Residues glutamate 192 and aspartate 217 each coordinate Zn(2+). The N-linked (GlcNAc...) asparagine glycan is linked to asparagine 252. Residue histidine 464 participates in Zn(2+) binding.

It belongs to the peptidase M20A family. Requires Zn(2+) as cofactor.

Its subcellular location is the secreted. It carries out the reaction an N-acyl-L-amino acid + H2O = an L-alpha-amino acid + a carboxylate. It catalyses the reaction an N-acyl-aromatic L-alpha-amino acid + H2O = an aromatic L-alpha-amino acid + a carboxylate. The catalysed reaction is L-phenylalanine + (9Z)-octadecenoate = N-(9Z-octadecenoyl)-L-phenylalanine + H2O. The enzyme catalyses N-(9Z-octadecenoyl)-L-leucine + H2O = L-leucine + (9Z)-octadecenoate. It carries out the reaction N-(5Z,8Z,11Z,14Z)-eicosatetraenoyl-glycine + H2O = (5Z,8Z,11Z,14Z)-eicosatetraenoate + glycine. It catalyses the reaction N-hexadecanoyl-L-phenylalanine + H2O = hexadecanoate + L-phenylalanine. The catalysed reaction is N-octadecanoyl-L-phenylalanine + H2O = octadecanoate + L-phenylalanine. The enzyme catalyses N-(4Z,7Z,10Z,13Z,16Z,19Z-docosahexaenoyl)-L-phenylalanine + H2O = (4Z,7Z,10Z,13Z,16Z,19Z)-docosahexaenoate + L-phenylalanine. It carries out the reaction N-(9Z-octadecenoyl)-L-asparagine + H2O = L-asparagine + (9Z)-octadecenoate. It catalyses the reaction (9Z)-octadecenoate + glycine = N-(9Z-octadecenoyl)glycine + H2O. The catalysed reaction is N-(9Z-octadecenoyl)-L-lysine + H2O = L-lysine + (9Z)-octadecenoate. The enzyme catalyses N-(9Z-octadecenoyl)-L-methionine + H2O = (9Z)-octadecenoate + L-methionine. It carries out the reaction N-(9Z-octadecenoyl)-L-serine + H2O = L-serine + (9Z)-octadecenoate. It catalyses the reaction N-(9Z-octadecenoyl)-L-tryptophan + H2O = L-tryptophan + (9Z)-octadecenoate. The catalysed reaction is N-(9Z-octadecenoyl)-L-tyrosine + H2O = L-tyrosine + (9Z)-octadecenoate. The enzyme catalyses N-(9Z-octadecenoyl)-L-glutamine + H2O = L-glutamine + (9Z)-octadecenoate. It carries out the reaction N-(5Z,8Z,11Z,14Z-eicosatetraenoyl)-L-serine + H2O = (5Z,8Z,11Z,14Z)-eicosatetraenoate + L-serine. It catalyses the reaction (5Z,8Z,11Z,14Z)-eicosatetraenoate + L-phenylalanine = N-(5Z,8Z,11Z,14Z-eicosatetraenoyl)-L-phenylalanine + H2O. It functions in the pathway amino-acid metabolism. The protein operates within energy metabolism. It participates in lipid metabolism; fatty acid metabolism. With respect to regulation, lipoproteins are powerful coactivators of PM20D1 activity in vitro and NAA biosynthesis in vivo. In terms of biological role, secreted enzyme that regulates the endogenous N-fatty acyl amino acid (NAAs) tissue and circulating levels by functioning as a bidirectional NAA synthase/hydrolase. It condenses free fatty acids and free amino acids to generate NAAs and bidirectionally catalyzes the reverse hydrolysis reaction. Some of these NAAs stimulate oxidative metabolism via mitochondrial uncoupling, increasing energy expenditure in a UPC1-independent manner. Thereby, this secreted protein may indirectly regulate whole body energy expenditure. PM20D1 circulates in tight association with both low- and high-density (LDL and HDL,respectively) lipoprotein particles. This Homo sapiens (Human) protein is N-fatty-acyl-amino acid synthase/hydrolase PM20D1.